Here is a 203-residue protein sequence, read N- to C-terminus: CASP-like protein 2U5 (203 aa).

The Cytoplasmic portion of the chain corresponds to 1-31; sequence MSEHRIPVAADKQISPPISAGEQKGCKGLKR. Residues 32–52 form a helical membrane-spanning segment; the sequence is TDLMLRFAAFVCCAVTMVVLI. Topologically, residues 53–84 are extracellular; the sequence is TDKQTSAIQVPGFNNLTITKTVSFDLAKAFVY. The N-linked (GlcNAc...) asparagine glycan is linked to asparagine 67. A helical membrane pass occupies residues 85–105; it reads LVSAAGIGAGYTLLVLVLSII. Residues 106-111 lie on the Cytoplasmic side of the membrane; sequence SAERSK. A helical transmembrane segment spans residues 112–132; the sequence is AIAWFIFVFDQLITYVLLAAA. Residues 133–164 lie on the Extracellular side of the membrane; that stretch reads AASTEVAYMGAHAPPEASWLKVCSLFGRFCHQ. A helical membrane pass occupies residues 165–185; it reads LGASLVTSFISTVLFAFSAAI. At 186 to 203 the chain is on the cytoplasmic side; the sequence is SAYYLFSNTNVRPAYSKG.

It belongs to the Casparian strip membrane proteins (CASP) family. Homodimer and heterodimers.

The protein localises to the cell membrane. This Selaginella moellendorffii (Spikemoss) protein is CASP-like protein 2U5.